Consider the following 299-residue polypeptide: Delta-9 desaturase-like 5 protein (299 aa).

2 consecutive transmembrane segments (helical) span residues 31–51 (ADII…LAPF) and 55–75 (WEAL…ITFS). The Histidine box-1 motif lies at 77–82 (HRNLAH). The Histidine box-2 motif lies at 114–118 (HRFHH). Transmembrane regions (helical) follow at residues 174–194 (IGFH…LPYL) and 199–219 (GVGG…CHIW). The short motif at 246 to 250 (HNNHH) is the Histidine box-3 element.

It belongs to the fatty acid desaturase type 1 family. Fe cation is required as a cofactor.

The protein resides in the endoplasmic reticulum membrane. The protein operates within lipid metabolism; polyunsaturated fatty acid biosynthesis. The sequence is that of Delta-9 desaturase-like 5 protein from Arabidopsis thaliana (Mouse-ear cress).